Reading from the N-terminus, the 65-residue chain is Period circadian protein (65 aa).

The segment at 1–65 (EGSGGSGSSG…VTLTESLLNK (65 aa)) is disordered. A compositionally biased stretch (polar residues) spans 18–28 (VRMSSVTNTSN). The segment covering 29 to 38 (AGTGTSAGDN) has biased composition (low complexity). The span at 56-65 (VTLTESLLNK) shows a compositional bias: polar residues.

In terms of assembly, forms a heterodimer with timeless (TIM); the complex then translocates into the nucleus. Phosphorylated with a circadian rhythmicity, probably by the double-time protein (dbt). Phosphorylation could be implicated in the stability of per monomer and in the formation of heterodimer per-tim.

It is found in the nucleus. The protein resides in the cytoplasm. The protein localises to the perinuclear region. Essential for biological clock functions. Determines the period length of circadian and ultradian rhythms; an increase in PER dosage leads to shortened circadian rhythms and a decrease leads to lengthened circadian rhythms. Essential for the circadian rhythmicity of locomotor activity, eclosion behavior, and for the rhythmic component of the male courtship song that originates in the thoracic nervous system. The biological cycle depends on the rhythmic formation and nuclear localization of the TIM-PER complex. Light induces the degradation of TIM, which promotes elimination of PER. Nuclear activity of the heterodimer coordinatively regulates PER and TIM transcription through a negative feedback loop. Behaves as a negative element in circadian transcriptional loop. Does not appear to bind DNA, suggesting indirect transcriptional inhibition. This chain is Period circadian protein (per), found in Drosophila mojavensis (Fruit fly).